Here is a 101-residue protein sequence, read N- to C-terminus: NAD(P)H-quinone oxidoreductase subunit 4L, chloroplastic (101 aa).

Transmembrane regions (helical) follow at residues 2–22, 32–52, and 61–81; these read MLEYALVLSAFLFSIGIYGLI, MCLELILNAVNMNLVTFSYFF, and IFSIFIIAIAAAEAAIGLAIV.

Belongs to the complex I subunit 4L family. As to quaternary structure, NDH is composed of at least 16 different subunits, 5 of which are encoded in the nucleus.

The protein resides in the plastid. The protein localises to the chloroplast thylakoid membrane. It catalyses the reaction a plastoquinone + NADH + (n+1) H(+)(in) = a plastoquinol + NAD(+) + n H(+)(out). The catalysed reaction is a plastoquinone + NADPH + (n+1) H(+)(in) = a plastoquinol + NADP(+) + n H(+)(out). In terms of biological role, NDH shuttles electrons from NAD(P)H:plastoquinone, via FMN and iron-sulfur (Fe-S) centers, to quinones in the photosynthetic chain and possibly in a chloroplast respiratory chain. The immediate electron acceptor for the enzyme in this species is believed to be plastoquinone. Couples the redox reaction to proton translocation, and thus conserves the redox energy in a proton gradient. In Ipomoea purpurea (Common morning glory), this protein is NAD(P)H-quinone oxidoreductase subunit 4L, chloroplastic.